A 753-amino-acid chain; its full sequence is 5-methyltetrahydropteroyltriglutamate--homocysteine methyltransferase (753 aa).

Residues 17–20 (RELK) and K117 each bind 5-methyltetrahydropteroyltri-L-glutamate. L-homocysteine contacts are provided by residues 431-433 (IGS) and E484. L-methionine contacts are provided by residues 431–433 (IGS) and E484. 5-methyltetrahydropteroyltri-L-glutamate-binding positions include 515–516 (RC) and W561. D599 is an L-homocysteine binding site. Residue D599 coordinates L-methionine. 5-methyltetrahydropteroyltri-L-glutamate is bound at residue E605. H641, C643, and E665 together coordinate Zn(2+). Catalysis depends on H694, which acts as the Proton donor. C726 provides a ligand contact to Zn(2+).

Belongs to the vitamin-B12 independent methionine synthase family. Requires Zn(2+) as cofactor.

The catalysed reaction is 5-methyltetrahydropteroyltri-L-glutamate + L-homocysteine = tetrahydropteroyltri-L-glutamate + L-methionine. It participates in amino-acid biosynthesis; L-methionine biosynthesis via de novo pathway; L-methionine from L-homocysteine (MetE route): step 1/1. Its function is as follows. Catalyzes the transfer of a methyl group from 5-methyltetrahydrofolate to homocysteine resulting in methionine formation. This chain is 5-methyltetrahydropteroyltriglutamate--homocysteine methyltransferase, found in Escherichia coli O6:H1 (strain CFT073 / ATCC 700928 / UPEC).